A 1268-amino-acid chain; its full sequence is SR-related and CTD-associated factor 8 (1268 aa).

Positions 1–139 constitute a CID domain; it reads MEAVKTFNSE…PLLDMAAGIP (139 aa). Position 6 is a phosphothreonine (threonine 6). Residue lysine 18 forms a Glycyl lysine isopeptide (Lys-Gly) (interchain with G-Cter in SUMO1) linkage. The span at 270–283 shows a compositional bias: basic and acidic residues; sequence GEDSEHSEESKKEM. Disordered regions lie at residues 270–290, 322–355, and 385–469; these read GEDS…QLSH, QQQP…QQHF, and EIFE…PVRS. Residue serine 273 is modified to Phosphoserine. Over residues 327 to 354 the composition is skewed to polar residues; sequence KVTPQDSQEGTFGSEHSASPSQGSSQQH. A compositionally biased stretch (basic residues) spans 394 to 443; that stretch reads VAVRSRSRTHSRSRSRSPRKRRSRSRSGSRKRKHRKRSRSHSREKKRKAS. Over residues 447 to 461 the composition is skewed to basic and acidic residues; that stretch reads SSERRAREREKERQK. Residues 477–551 enclose the RRM domain; sequence TTLWVGQVDK…KVIKIAWALN (75 aa). Residue serine 617 is modified to Phosphoserine. Residues 776–807 form a disordered region; sequence QIPSGENTRPVIPSDIPSSAAMLAQPPGASST. Arginine 915, arginine 925, and arginine 936 each carry asymmetric dimethylarginine. Disordered regions lie at residues 984 to 1012 and 1040 to 1065; these read PGRP…EGDR and RLDP…PVDM. Asymmetric dimethylarginine is present on arginine 1071. The interval 1199-1268 is disordered; the sequence is ATSQRKGDNV…VVESTETEGT (70 aa). Positions 1249 to 1262 are enriched in low complexity; sequence GTVAGVESEAVVES.

In terms of assembly, interacts with POLR2A; via C-terminal heptapeptide repeat domain (CTD) phosphorylated at 'Ser-2' and 'Ser-5'. Identified in a complex with CDC5L and other spliceosomal proteins.

The protein localises to the nucleus. It localises to the nucleus matrix. In terms of biological role, anti-terminator protein required to prevent early mRNA termination during transcription. Together with SCAF4, acts by suppressing the use of early, alternative poly(A) sites, thereby preventing the accumulation of non-functional truncated proteins. Mechanistically, associates with the phosphorylated C-terminal heptapeptide repeat domain (CTD) of the largest RNA polymerase II subunit (POLR2A), and subsequently binds nascent RNA upstream of early polyadenylation sites to prevent premature mRNA transcript cleavage and polyadenylation. Independently of SCAF4, also acts as a positive regulator of transcript elongation. The polypeptide is SR-related and CTD-associated factor 8 (Mus musculus (Mouse)).